The primary structure comprises 542 residues: Chondroitin sulfate N-acetylgalactosaminyltransferase 2 (542 aa).

At 1 to 13 (MSRRGSILHSRTQ) the chain is on the cytoplasmic side. A helical; Signal-anchor for type II membrane protein membrane pass occupies residues 14–34 (WLLLGLALLFSLVLFMYLLEC). Topologically, residues 35–542 (APQTDGNASL…AYRTNSETAG (508 aa)) are lumenal. N-linked (GlcNAc...) asparagine glycosylation occurs at Asn-41. A coiled-coil region spans residues 59–105 (ALLQEQEEHYQTRATSLKRQIAQLKQELQDMSEKMRALQERKKLGAN). Asn-333 carries an N-linked (GlcNAc...) asparagine glycan. A divalent metal cation contacts are provided by Asp-369 and His-486.

It belongs to the chondroitin N-acetylgalactosaminyltransferase family.

The protein localises to the golgi apparatus. It localises to the golgi stack membrane. It catalyses the reaction 3-O-(beta-D-GlcA-(1-&gt;3)-beta-D-Gal-(1-&gt;3)-beta-D-Gal-(1-&gt;4)-beta-D-Xyl)-L-seryl-[protein] + UDP-N-acetyl-alpha-D-galactosamine = 3-O-(beta-D-GalNAc-(1-&gt;4)-beta-D-GlcA-(1-&gt;3)-beta-D-Gal-(1-&gt;3)-beta-D-Gal-(1-&gt;4)-beta-D-Xyl)-L-seryl-[protein] + UDP + H(+). Its function is as follows. Transfers 1,4-N-acetylgalactosamine (GalNAc) from UDP-GalNAc to the non-reducing end of glucuronic acid (GlcUA). Required for addition of the first GalNAc to the core tetrasaccharide linker and for elongation of chondroitin chains. In Mus musculus (Mouse), this protein is Chondroitin sulfate N-acetylgalactosaminyltransferase 2 (Csgalnact2).